Here is a 420-residue protein sequence, read N- to C-terminus: Ammonia monooxygenase beta subunit (420 aa).

Residues 1–25 (MGIKNLYKRGVMGLYGVAYAVAALA) form the signal peptide. Residues His-38, His-142, and His-144 each coordinate Cu cation. Transmembrane regions (helical) follow at residues 193–213 (GIFW…VFTA) and 240–260 (ITWV…RYTE).

In terms of assembly, the soluble ammonia monooxygenase is a nonamer composed of three alpha subunits (AmoA), three beta subunits (AmoB) and three gamma subunits (Cytochrome c1 PetC). Cu(2+) serves as cofactor.

Its subcellular location is the cell membrane. It localises to the cytoplasm. The enzyme catalyses AH2 + NH4(+) + O2 = hydroxylamine + A + H2O + H(+). In vitro, inhibited by acetylene. In terms of biological role, part of the ammonia monooxygenase complex, which catalyzes the oxidation of ammonia to hydroxylamine, the first reaction in the process of ammonia oxidation to nitrite. The polypeptide is Ammonia monooxygenase beta subunit (Nitrosomonas europaea (strain ATCC 19718 / CIP 103999 / KCTC 2705 / NBRC 14298)).